The chain runs to 183 residues: Glutathione-regulated potassium-efflux system ancillary protein KefG (183 aa).

The protein belongs to the NAD(P)H dehydrogenase (quinone) family. KefG subfamily. In terms of assembly, interacts with KefB.

It is found in the cell inner membrane. The enzyme catalyses a quinone + NADH + H(+) = a quinol + NAD(+). It catalyses the reaction a quinone + NADPH + H(+) = a quinol + NADP(+). In terms of biological role, regulatory subunit of a potassium efflux system that confers protection against electrophiles. Required for full activity of KefB. In Shigella flexneri serotype 5b (strain 8401), this protein is Glutathione-regulated potassium-efflux system ancillary protein KefG.